The primary structure comprises 151 residues: Large ribosomal subunit protein uL22 (151 aa).

It belongs to the universal ribosomal protein uL22 family. Part of the 50S ribosomal subunit.

In terms of biological role, this protein binds specifically to 23S rRNA. It makes multiple contacts with different domains of the 23S rRNA in the assembled 50S subunit and ribosome. Its function is as follows. The globular domain of the protein is located near the polypeptide exit tunnel on the outside of the subunit, while an extended beta-hairpin is found that lines the wall of the exit tunnel in the center of the 70S ribosome. This is Large ribosomal subunit protein uL22 from Methanococcoides burtonii (strain DSM 6242 / NBRC 107633 / OCM 468 / ACE-M).